We begin with the raw amino-acid sequence, 184 residues long: dTTP/UTP pyrophosphatase (184 aa).

The active-site Proton acceptor is the Asp67.

It belongs to the Maf family. YhdE subfamily. The cofactor is a divalent metal cation.

Its subcellular location is the cytoplasm. It carries out the reaction dTTP + H2O = dTMP + diphosphate + H(+). It catalyses the reaction UTP + H2O = UMP + diphosphate + H(+). In terms of biological role, nucleoside triphosphate pyrophosphatase that hydrolyzes dTTP and UTP. May have a dual role in cell division arrest and in preventing the incorporation of modified nucleotides into cellular nucleic acids. This chain is dTTP/UTP pyrophosphatase, found in Elusimicrobium minutum (strain Pei191).